The sequence spans 972 residues: Aminopeptidase N (972 aa).

The Cytoplasmic segment spans residues 2 to 17; the sequence is TSQGRTRTLLNLTPIR. A helical; Signal-anchor for type II membrane protein transmembrane segment spans residues 18–39; it reads LIVALFLVAAAVGLSIGLTYYF. Over 40–972 the chain is Extracellular; sequence TRKAFDTSEK…LAAFFKKATL (933 aa). Over residues 47-62 the composition is skewed to basic and acidic residues; the sequence is SEKPGKDDTGGKDKDN. The interval 47–66 is disordered; it reads SEKPGKDDTGGKDKDNSPSA. Asparagine 99 carries N-linked (GlcNAc...) asparagine glycosylation. Glutamate 208 contacts substrate. The N-linked (GlcNAc...) asparagine glycan is linked to asparagine 227. 343–347 provides a ligand contact to substrate; that stretch reads GAMEN. Histidine 379 is a Zn(2+) binding site. Glutamate 380 functions as the Proton acceptor in the catalytic mechanism. Zn(2+) contacts are provided by histidine 383 and glutamate 402. A glycan (N-linked (GlcNAc...) asparagine) is linked at asparagine 549. Cystine bridges form between cysteine 759–cysteine 766 and cysteine 804–cysteine 840. Asparagine 858 carries an N-linked (GlcNAc...) asparagine glycan.

The protein belongs to the peptidase M1 family. Zn(2+) serves as cofactor.

Its subcellular location is the membrane. It catalyses the reaction Release of an N-terminal amino acid, Xaa-|-Yaa- from a peptide, amide or arylamide. Xaa is preferably Ala, but may be most amino acids including Pro (slow action). When a terminal hydrophobic residue is followed by a prolyl residue, the two may be released as an intact Xaa-Pro dipeptide.. This Haemonchus contortus (Barber pole worm) protein is Aminopeptidase N.